We begin with the raw amino-acid sequence, 816 residues long: MGTSVRRISVVLMMLFGTNFCWSQSMQHPVIWVTQDEKQDILNLIEKYDWAKKMEHDLHAVVDKKVEAHQKKPSVILSHIPEIPADNSLTEFEAVTVGDHAAVLTDASYAAMLYFLTDDEKYAQFSADVLWHYVTVLSDRSPKNTTICGNHFYDPRTSYAQFALAYDFIYNFLNKPTTKVYKASANKQQTFDRDLFQKVLLNMVGSSLQEYGRPDTHGKFISNHPILTAPGVLYGILCIEDDKERERLFDVFWEKGTAHQNSFKNTILPMFGKQGIWPESTSYSFMPAVTLVLNIIDRVYPEMQVTQNYKNIYKGNFLFDNLRMPDGRFVRYGDSKRNHDGTEQLYRYTLNLAQRRGYSNLENQAKIALSQAYQRQGGYQSKISPATFNSSEPLKLFWGTPIPKGIDSKIDFKKPTVLVEHAGIALQRNYVETDNELYGLCGIIGGAHYVHSHVTGITMELYGAGYVMAPNGGLPKTVKERRIPLHENYFRLYAGNNTVIVNGTSHGIQPGSWKDGAYVWQNTVVNIAAEPKHLEDPISEHFNFATQFLKDTINNCDQERTLSTIRTSEKTGYYLDVFRSKSLTENKFQDYIYHNIGDATLLETENGETLRTEPTTRYKTDIGDPVQSPGWRYFEDTKSTKPIHKGVHATFKIDYDERFMHMFVPQGVNRSYTTALAPPTREAKNGYEEKPTQVLAIRQDGEAWEKPFIAVFEPSVKASSSVQTVTPLQDADKVVGVTVISKVNGKLITDYIISLDSKDGVYENKILKIKFEGRFGIIRVEGEQKTISLYIGEGKTLKYNNYTLDSETATTAYKVF.

The signal sequence occupies residues 1 to 23; it reads MGTSVRRISVVLMMLFGTNFCWS.

Belongs to the polysaccharide lyase family.

It localises to the cell surface. Its subcellular location is the periplasm. Ulvan lyase involved in ulvan degradation. Ulvan is the main polysaccharide component of the Ulvales (green seaweed) cell wall. It is composed of disaccharide building blocks comprising 3-sulfated rhamnose (Rha3S) linked to D-glucuronic acid (GlcA), L-iduronic acid (IduA), or D-xylose (Xyl). Ulvan lyase catalyzes the endolytic cleavage of the glycosidic bond between Rha3S and the uronic acids GlcA or IduA, producing oligosaccharides that have unsaturated 4-deoxy-L-threo-hex-4-enopyranosiduronic acid (deltaUA) at the non-reducing end. This results eventually in the degradation of the ulvan polysaccharide into deltaUA-Rha3S disaccharides and deltaUA-Rha3S-Xyl-Rha3S tetrasaccharides. In Formosa agariphila (strain DSM 15362 / KCTC 12365 / LMG 23005 / KMM 3901 / M-2Alg 35-1), this protein is Endo-acting ulvan lyase.